Here is a 346-residue protein sequence, read N- to C-terminus: Biotin synthase (346 aa).

The 219-residue stretch at 38-256 (RQVQVSTLLS…IAVARIMMPT (219 aa)) folds into the Radical SAM core domain. [4Fe-4S] cluster contacts are provided by cysteine 53, cysteine 57, and cysteine 60. Cysteine 97, cysteine 128, cysteine 188, and arginine 260 together coordinate [2Fe-2S] cluster.

Belongs to the radical SAM superfamily. Biotin synthase family. In terms of assembly, homodimer. Requires [4Fe-4S] cluster as cofactor. It depends on [2Fe-2S] cluster as a cofactor.

The catalysed reaction is (4R,5S)-dethiobiotin + (sulfur carrier)-SH + 2 reduced [2Fe-2S]-[ferredoxin] + 2 S-adenosyl-L-methionine = (sulfur carrier)-H + biotin + 2 5'-deoxyadenosine + 2 L-methionine + 2 oxidized [2Fe-2S]-[ferredoxin]. It functions in the pathway cofactor biosynthesis; biotin biosynthesis; biotin from 7,8-diaminononanoate: step 2/2. In terms of biological role, catalyzes the conversion of dethiobiotin (DTB) to biotin by the insertion of a sulfur atom into dethiobiotin via a radical-based mechanism. The chain is Biotin synthase from Pseudescherichia vulneris (Escherichia vulneris).